Reading from the N-terminus, the 290-residue chain is PIH1 domain-containing protein 1 (290 aa).

A phosphoserine mark is found at S12 and S173.

The protein belongs to the PIH1 family. In terms of assembly, component of the R2TP complex composed at least of RUVBL1, RUVBL2, RPAP3 and PIHD1. Component of the PAQosome complex which is responsible for the biogenesis of several protein complexes and which consists of R2TP complex members RUVBL1, RUVBL2, RPAP3 and PIH1D1, URI complex members PFDN2, PFDN6, PDRG1, UXT and URI1 as well as ASDURF, POLR2E and DNAAF10/WDR92. Interacts with phosphorylated TELO2 and mediates interaction of TELO2 with the R2TP complex. Interacts with phosphorylated ECD, EFTUD2/SNRP116, RPB1 and UBR5 and with RPB1 in a phosphorylation-independent manner. Interacts with the core C/D box snoRNP particle components NOP58 and FBL and with RUVBL1/TIP49. Interacts with RPAP3 and DNAAF10. Interacts with histone H4 and with SWI/SNF complex member SMARCB1/SNF5. Interacts with the mTORC1 complex member RPTOR. Interacts with MSL1. As to expression, expressed at low levels in normal mammary epithelial cells (at protein level). Highest expression in lung, leukocyte and placenta. Expressed at lower levels in brain, prostate, colon, heart, small intestine, liver, ovary, pancreas, skeletal muscle, spleen, testis and thymus.

Its subcellular location is the nucleus. Involved in the assembly of C/D box small nucleolar ribonucleoprotein (snoRNP) particles. Recruits the SWI/SNF complex to the core promoter of rRNA genes and enhances pre-rRNA transcription. Mediates interaction of TELO2 with the R2TP complex which is necessary for the stability of MTOR and SMG1. Positively regulates the assembly and activity of the mTORC1 complex. This is PIH1 domain-containing protein 1 (PIH1D1) from Homo sapiens (Human).